Reading from the N-terminus, the 255-residue chain is 5'-nucleotidase SurE (255 aa).

A divalent metal cation-binding residues include Asp8, Asp9, Ser40, and Asn93.

Belongs to the SurE nucleotidase family. The cofactor is a divalent metal cation.

It is found in the cytoplasm. The enzyme catalyses a ribonucleoside 5'-phosphate + H2O = a ribonucleoside + phosphate. Functionally, nucleotidase that shows phosphatase activity on nucleoside 5'-monophosphates. This chain is 5'-nucleotidase SurE, found in Nitrobacter hamburgensis (strain DSM 10229 / NCIMB 13809 / X14).